A 173-amino-acid chain; its full sequence is 3-hydroxydecanoyl-[acyl-carrier-protein] dehydratase (173 aa).

The active site involves histidine 71.

The protein belongs to the thioester dehydratase family. FabA subfamily. As to quaternary structure, homodimer.

The protein localises to the cytoplasm. It catalyses the reaction a (3R)-hydroxyacyl-[ACP] = a (2E)-enoyl-[ACP] + H2O. The catalysed reaction is (3R)-hydroxydecanoyl-[ACP] = (2E)-decenoyl-[ACP] + H2O. The enzyme catalyses (2E)-decenoyl-[ACP] = (3Z)-decenoyl-[ACP]. It participates in lipid metabolism; fatty acid biosynthesis. Its function is as follows. Necessary for the introduction of cis unsaturation into fatty acids. Catalyzes the dehydration of (3R)-3-hydroxydecanoyl-ACP to E-(2)-decenoyl-ACP and then its isomerization to Z-(3)-decenoyl-ACP. Can catalyze the dehydratase reaction for beta-hydroxyacyl-ACPs with saturated chain lengths up to 16:0, being most active on intermediate chain length. The protein is 3-hydroxydecanoyl-[acyl-carrier-protein] dehydratase of Bradyrhizobium diazoefficiens (strain JCM 10833 / BCRC 13528 / IAM 13628 / NBRC 14792 / USDA 110).